Here is a 665-residue protein sequence, read N- to C-terminus: Pentatricopeptide repeat-containing protein At1g04840 (665 aa).

11 PPR repeats span residues 90–124, 125–155, 160–190, 195–229, 230–256, 257–291, 292–326, 327–357, 358–392, 393–423, and 429–459; these read NPFVLNALIRGLTENARFESSVRHFILMLRLGVKP, DRLTFPFVLKSNSKLGFRWLGRALHAATLKN, DSFVRLSLVDMYAKTGQLKHAFQVFEESPDR, SILIWNVLINGYCRAKDMHMATTLFRSMPERNSGS, WSTLIKGYVDSGELNRAKQLFELMPEK, NVVSWTTLINGFSQTGDYETAISTYFEMLEKGLKP, NEYTIAAVLSACSKSGALGSGIRIHGYILDNGIKL, DRAIGTALVDMYAKCGELDCAATVFSNMNHK, DILSWTAMIQGWAVHGRFHQAIQCFRQMMYSGEKP, DEVVFLAVLTACLNSSEVDLGLNFFDSMRLD, and TLKHYVLVVDLLGRAGKLNEAHELVENMPIN. The interval 464–539 is type E motif; that stretch reads TWAALYRACK…SLGWSYIELD (76 aa). The tract at residues 540–570 is type E(+) motif; sequence GQLNKFSAGDYSHKLTQEIGLKLDEIISLAI. The tract at residues 571 to 665 is type DYW motif; it reads QKGYNPGADW…DGRCSCGDYW (95 aa).

It belongs to the PPR family. PCMP-H subfamily.

In Arabidopsis thaliana (Mouse-ear cress), this protein is Pentatricopeptide repeat-containing protein At1g04840 (PCMP-H64).